The sequence spans 149 residues: Small ribosomal subunit protein eS19 (149 aa).

This sequence belongs to the eukaryotic ribosomal protein eS19 family.

This Mya arenaria (Soft-shell clam) protein is Small ribosomal subunit protein eS19 (RPS19).